Consider the following 119-residue polypeptide: Translation initiation factor 1A (119 aa).

The tract at residues 1–24 (MSEDDVDNSVKDFESGEENEESIG) is disordered. The region spanning 24–98 (GRVILPNKKK…EKADVVYRYT (75 aa)) is the S1-like domain.

It belongs to the eIF-1A family.

Functionally, seems to be required for maximal rate of protein biosynthesis. Enhances ribosome dissociation into subunits and stabilizes the binding of the initiator Met-tRNA(I) to 40 S ribosomal subunits. The polypeptide is Translation initiation factor 1A (eIF1A) (Thermoplasma acidophilum (strain ATCC 25905 / DSM 1728 / JCM 9062 / NBRC 15155 / AMRC-C165)).